Reading from the N-terminus, the 83-residue chain is Sulfur carrier protein TusA (83 aa).

The active-site Cysteine persulfide intermediate is the Cys19.

Belongs to the sulfur carrier protein TusA family.

It localises to the cytoplasm. Sulfur carrier protein which probably makes part of a sulfur-relay system. The protein is Sulfur carrier protein TusA of Aliivibrio fischeri (strain ATCC 700601 / ES114) (Vibrio fischeri).